Here is a 279-residue protein sequence, read N- to C-terminus: Energy-coupling factor transporter ATP-binding protein EcfA1 (279 aa).

One can recognise an ABC transporter domain in the interval 5–240; that stretch reads ITVNNLFFKY…GNRLISLGLD (236 aa). 40–47 lines the ATP pocket; sequence GHNGSGKS.

This sequence belongs to the ABC transporter superfamily. Energy-coupling factor EcfA family. Forms a stable energy-coupling factor (ECF) transporter complex composed of 2 membrane-embedded substrate-binding proteins (S component), 2 ATP-binding proteins (A component) and 2 transmembrane proteins (T component).

It localises to the cell membrane. Functionally, ATP-binding (A) component of a common energy-coupling factor (ECF) ABC-transporter complex. Unlike classic ABC transporters this ECF transporter provides the energy necessary to transport a number of different substrates. This Streptococcus agalactiae serotype Ia (strain ATCC 27591 / A909 / CDC SS700) protein is Energy-coupling factor transporter ATP-binding protein EcfA1.